The primary structure comprises 279 residues: UPF0173 metal-dependent hydrolase MXAN_1394 (279 aa).

It belongs to the UPF0173 family.

The sequence is that of UPF0173 metal-dependent hydrolase MXAN_1394 from Myxococcus xanthus (strain DK1622).